The primary structure comprises 185 residues: Protein DP71L (185 aa).

A compositionally biased stretch (basic residues) spans 1-15 (MSRRNKKRSRRRRKK). A disordered region spans residues 1–38 (MSRRNKKRSRRRRKKPLNDIQPGPSKSSAQDEPIKSVS). Important for host CHOP inhibition stretches follow at residues 126-128 (VHF) and 170-174 (LSTVF).

The protein belongs to the asfivirus DP71L family. Interacts (via C-terminus) with host PPP1CB.

Its function is as follows. Interacts with the host phosphatase PP1 catalytic subunit (PPP1CB) and recruits it to dephosphorylate EIF2S1/eIF2alpha and therefore restores the host translation that has been shut-down by the host. Also inhibits the EIF2S1/eIF2alpha-ATF4-DDIT3/CHOP pathway. This chain is Protein DP71L, found in African swine fever virus (isolate Pig/Kenya/KEN-50/1950) (ASFV).